The primary structure comprises 292 residues: ATP synthase gamma chain (292 aa).

Belongs to the ATPase gamma chain family. In terms of assembly, F-type ATPases have 2 components, CF(1) - the catalytic core - and CF(0) - the membrane proton channel. CF(1) has five subunits: alpha(3), beta(3), gamma(1), delta(1), epsilon(1). CF(0) has three main subunits: a, b and c.

It is found in the cell inner membrane. Its function is as follows. Produces ATP from ADP in the presence of a proton gradient across the membrane. The gamma chain is believed to be important in regulating ATPase activity and the flow of protons through the CF(0) complex. The polypeptide is ATP synthase gamma chain (Brucella canis (strain ATCC 23365 / NCTC 10854 / RM-666)).